The following is a 313-amino-acid chain: Aspartate carbamoyltransferase catalytic subunit (313 aa).

Carbamoyl phosphate-binding residues include arginine 58 and threonine 59. An L-aspartate-binding site is contributed by lysine 86. Carbamoyl phosphate contacts are provided by arginine 108, histidine 136, and glutamine 139. Arginine 169 and arginine 223 together coordinate L-aspartate. Carbamoyl phosphate is bound by residues glycine 264 and proline 265.

Belongs to the aspartate/ornithine carbamoyltransferase superfamily. ATCase family. In terms of assembly, heterododecamer (2C3:3R2) of six catalytic PyrB chains organized as two trimers (C3), and six regulatory PyrI chains organized as three dimers (R2).

It catalyses the reaction carbamoyl phosphate + L-aspartate = N-carbamoyl-L-aspartate + phosphate + H(+). Its pathway is pyrimidine metabolism; UMP biosynthesis via de novo pathway; (S)-dihydroorotate from bicarbonate: step 2/3. Catalyzes the condensation of carbamoyl phosphate and aspartate to form carbamoyl aspartate and inorganic phosphate, the committed step in the de novo pyrimidine nucleotide biosynthesis pathway. The sequence is that of Aspartate carbamoyltransferase catalytic subunit from Syntrophotalea carbinolica (strain DSM 2380 / NBRC 103641 / GraBd1) (Pelobacter carbinolicus).